The primary structure comprises 567 residues: Thiol:disulfide interchange protein DsbD (567 aa).

Residues 1-19 (MAQRIFTLILLLCSTSAFA) form the signal peptide. Disulfide bonds link cysteine 122–cysteine 128 and cysteine 185–cysteine 307. Transmembrane regions (helical) follow at residues 170–192 (ALWALLIGIGIAFTPCVLPMYPL), 212–234 (LAFIYVQGMALTYTALGLVVAAA), 246–268 (YVLIGLAIVFTLLALSMFGLFTL), 297–319 (GAIAGLICSPCTTAPLSAILLYI), 326–348 (WLGGGTLYLYALGMGLPLMLVTV), 358–380 (GPWMAHVKTAFGFVILALPVFLL), and 387–409 (AWGLRLWSLLGVAFFGWAFITSL). The region spanning 435–567 (QDWAFGSPSA…FSAHLHDRQP (133 aa)) is the Thioredoxin domain. Cysteine 482 and cysteine 485 are oxidised to a cystine.

Belongs to the thioredoxin family. DsbD subfamily.

The protein localises to the cell inner membrane. The catalysed reaction is [protein]-dithiol + NAD(+) = [protein]-disulfide + NADH + H(+). It carries out the reaction [protein]-dithiol + NADP(+) = [protein]-disulfide + NADPH + H(+). In terms of biological role, required to facilitate the formation of correct disulfide bonds in some periplasmic proteins and for the assembly of the periplasmic c-type cytochromes. Acts by transferring electrons from cytoplasmic thioredoxin to the periplasm. This transfer involves a cascade of disulfide bond formation and reduction steps. In Salmonella typhi, this protein is Thiol:disulfide interchange protein DsbD.